The sequence spans 79 residues: MNHLPVECPRCAFEDISLLATSPVPGVWDVVQCGRCLYTWRTIEPARRTRRDAYPDSFKLTAEDIENAIEVPAVPPLLK.

Functionally, involved in the non-oxidative decarboxylation and detoxification of phenolic derivatives under both aerobic and anaerobic conditions, however the precise biochemical function of VdcD in metabolism of phenolic acid is unknown. The chain is Protein VdcD from Streptomyces sp. (strain D7).